A 343-amino-acid polypeptide reads, in one-letter code: Lipopolysaccharide core biosynthesis glycosyltransferase LpsD (343 aa).

Belongs to the glycosyltransferase group 1 family. Glycosyltransferase 4 subfamily.

It participates in bacterial outer membrane biogenesis; LPS core biosynthesis. The sequence is that of Lipopolysaccharide core biosynthesis glycosyltransferase LpsD (lpsD) from Rhizobium meliloti (strain 1021) (Ensifer meliloti).